A 229-amino-acid chain; its full sequence is Guanylate kinase (229 aa).

Residues arginine 7 to serine 42 form the RPE1 insert domain. Residues glycine 44–valine 222 enclose the Guanylate kinase-like domain. Serine 51–serine 58 serves as a coordination point for ATP.

Belongs to the guanylate kinase family.

The protein resides in the cytoplasm. The enzyme catalyses GMP + ATP = GDP + ADP. Its function is as follows. Essential for recycling GMP and indirectly, cGMP. The sequence is that of Guanylate kinase (gmk) from Rickettsia conorii (strain ATCC VR-613 / Malish 7).